Reading from the N-terminus, the 430-residue chain is Glutamate-1-semialdehyde 2,1-aminomutase (430 aa).

The residue at position 265 (lysine 265) is an N6-(pyridoxal phosphate)lysine.

The protein belongs to the class-III pyridoxal-phosphate-dependent aminotransferase family. HemL subfamily. As to quaternary structure, homodimer. Requires pyridoxal 5'-phosphate as cofactor.

It is found in the cytoplasm. It catalyses the reaction (S)-4-amino-5-oxopentanoate = 5-aminolevulinate. The protein operates within porphyrin-containing compound metabolism; protoporphyrin-IX biosynthesis; 5-aminolevulinate from L-glutamyl-tRNA(Glu): step 2/2. The sequence is that of Glutamate-1-semialdehyde 2,1-aminomutase (hemL) from Helicobacter pylori (strain J99 / ATCC 700824) (Campylobacter pylori J99).